Here is a 100-residue protein sequence, read N- to C-terminus: Small ribosomal subunit protein uS14c (100 aa).

It belongs to the universal ribosomal protein uS14 family. As to quaternary structure, part of the 30S ribosomal subunit.

The protein localises to the plastid. Its subcellular location is the chloroplast. In terms of biological role, binds 16S rRNA, required for the assembly of 30S particles. The chain is Small ribosomal subunit protein uS14c from Liriodendron tulipifera (Tuliptree).